A 172-amino-acid polypeptide reads, in one-letter code: Large ribosomal subunit protein uL10 (172 aa).

It belongs to the universal ribosomal protein uL10 family. In terms of assembly, part of the ribosomal stalk of the 50S ribosomal subunit. The N-terminus interacts with L11 and the large rRNA to form the base of the stalk. The C-terminus forms an elongated spine to which L12 dimers bind in a sequential fashion forming a multimeric L10(L12)X complex.

In terms of biological role, forms part of the ribosomal stalk, playing a central role in the interaction of the ribosome with GTP-bound translation factors. The sequence is that of Large ribosomal subunit protein uL10 from Chlamydia trachomatis serovar L2 (strain ATCC VR-902B / DSM 19102 / 434/Bu).